A 253-amino-acid polypeptide reads, in one-letter code: Phosphoribosylaminoimidazole-succinocarboxamide synthase (253 aa).

Belongs to the SAICAR synthetase family.

It catalyses the reaction 5-amino-1-(5-phospho-D-ribosyl)imidazole-4-carboxylate + L-aspartate + ATP = (2S)-2-[5-amino-1-(5-phospho-beta-D-ribosyl)imidazole-4-carboxamido]succinate + ADP + phosphate + 2 H(+). It participates in purine metabolism; IMP biosynthesis via de novo pathway; 5-amino-1-(5-phospho-D-ribosyl)imidazole-4-carboxamide from 5-amino-1-(5-phospho-D-ribosyl)imidazole-4-carboxylate: step 1/2. The polypeptide is Phosphoribosylaminoimidazole-succinocarboxamide synthase (Dinoroseobacter shibae (strain DSM 16493 / NCIMB 14021 / DFL 12)).